Here is a 278-residue protein sequence, read N- to C-terminus: Large ribosomal subunit protein uL2 (278 aa).

Residues 201–278 (HGNINDGKAG…IMRSRHQRKK (78 aa)) form a disordered region. A compositionally biased stretch (basic residues) spans 210-221 (GRSRWRGKRPHV).

Belongs to the universal ribosomal protein uL2 family. In terms of assembly, part of the 50S ribosomal subunit. Forms a bridge to the 30S subunit in the 70S ribosome.

Functionally, one of the primary rRNA binding proteins. Required for association of the 30S and 50S subunits to form the 70S ribosome, for tRNA binding and peptide bond formation. It has been suggested to have peptidyltransferase activity; this is somewhat controversial. Makes several contacts with the 16S rRNA in the 70S ribosome. In Sinorhizobium fredii (strain NBRC 101917 / NGR234), this protein is Large ribosomal subunit protein uL2.